A 512-amino-acid chain; its full sequence is GMP synthase [glutamine-hydrolyzing] (512 aa).

A Glutamine amidotransferase type-1 domain is found at 7–197 (LVLVVDFGGQ…LFKVAGLKAD (191 aa)). C84 (nucleophile) is an active-site residue. Active-site residues include H171 and E173. A GMPS ATP-PPase domain is found at 198–387 (WSMASFAEEK…LGIPHKLVWR (190 aa)). 225 to 231 (SGGVDSS) lines the ATP pocket.

In terms of assembly, homodimer.

It carries out the reaction XMP + L-glutamine + ATP + H2O = GMP + L-glutamate + AMP + diphosphate + 2 H(+). The protein operates within purine metabolism; GMP biosynthesis; GMP from XMP (L-Gln route): step 1/1. In terms of biological role, catalyzes the synthesis of GMP from XMP. The chain is GMP synthase [glutamine-hydrolyzing] from Clostridium novyi (strain NT).